The sequence spans 55 residues: ATP synthase F(0) complex subunit 8 (55 aa).

The helical transmembrane segment at 4 to 24 (LNPSPWFIILLFSWVIFMVIL) threads the bilayer.

This sequence belongs to the ATPase protein 8 family. In terms of assembly, component of the ATP synthase complex composed at least of ATP5F1A/subunit alpha, ATP5F1B/subunit beta, ATP5MC1/subunit c (homooctomer), MT-ATP6/subunit a, MT-ATP8/subunit 8, ATP5ME/subunit e, ATP5MF/subunit f, ATP5MG/subunit g, ATP5MK/subunit k, ATP5MJ/subunit j, ATP5F1C/subunit gamma, ATP5F1D/subunit delta, ATP5F1E/subunit epsilon, ATP5PF/subunit F6, ATP5PB/subunit b, ATP5PD/subunit d, ATP5PO/subunit OSCP. ATP synthase complex consists of a soluble F(1) head domain (subunits alpha(3) and beta(3)) - the catalytic core - and a membrane F(0) domain - the membrane proton channel (subunits c, a, 8, e, f, g, k and j). These two domains are linked by a central stalk (subunits gamma, delta, and epsilon) rotating inside the F1 region and a stationary peripheral stalk (subunits F6, b, d, and OSCP).

Its subcellular location is the mitochondrion membrane. In terms of biological role, subunit 8, of the mitochondrial membrane ATP synthase complex (F(1)F(0) ATP synthase or Complex V) that produces ATP from ADP in the presence of a proton gradient across the membrane which is generated by electron transport complexes of the respiratory chain. ATP synthase complex consist of a soluble F(1) head domain - the catalytic core - and a membrane F(1) domain - the membrane proton channel. These two domains are linked by a central stalk rotating inside the F(1) region and a stationary peripheral stalk. During catalysis, ATP synthesis in the catalytic domain of F(1) is coupled via a rotary mechanism of the central stalk subunits to proton translocation. In vivo, can only synthesize ATP although its ATP hydrolase activity can be activated artificially in vitro. Part of the complex F(0) domain. This is ATP synthase F(0) complex subunit 8 from Scyliorhinus canicula (Small-spotted catshark).